A 177-amino-acid polypeptide reads, in one-letter code: ATP synthase subunit b (177 aa).

Residues Gly-15–Leu-35 form a helical membrane-spanning segment.

It belongs to the ATPase B chain family. As to quaternary structure, F-type ATPases have 2 components, F(1) - the catalytic core - and F(0) - the membrane proton channel. F(1) has five subunits: alpha(3), beta(3), gamma(1), delta(1), epsilon(1). F(0) has three main subunits: a(1), b(2) and c(10-14). The alpha and beta chains form an alternating ring which encloses part of the gamma chain. F(1) is attached to F(0) by a central stalk formed by the gamma and epsilon chains, while a peripheral stalk is formed by the delta and b chains.

It localises to the cell membrane. F(1)F(0) ATP synthase produces ATP from ADP in the presence of a proton or sodium gradient. F-type ATPases consist of two structural domains, F(1) containing the extramembraneous catalytic core and F(0) containing the membrane proton channel, linked together by a central stalk and a peripheral stalk. During catalysis, ATP synthesis in the catalytic domain of F(1) is coupled via a rotary mechanism of the central stalk subunits to proton translocation. In terms of biological role, component of the F(0) channel, it forms part of the peripheral stalk, linking F(1) to F(0). In Geobacillus kaustophilus (strain HTA426), this protein is ATP synthase subunit b.